A 507-amino-acid chain; its full sequence is Cytochrome P450 monooxygenase helB3 (507 aa).

A signal peptide spans 1–25; the sequence is MAVATLISILFAVLALRLCYLLIHA. N-linked (GlcNAc...) asparagine glycans are attached at residues Asn-111, Asn-206, and Asn-339. Cys-435 provides a ligand contact to heme.

The protein belongs to the cytochrome P450 family. It depends on heme as a cofactor.

It participates in mycotoxin biosynthesis. In terms of biological role, cytochrome P450 monooxygenase; part of the gene cluster that mediates the biosynthesis of helvolic acid, an antibacterial nortriterpenoid. Protostadienol synthase helA cyclizes (3S)-oxidosqualene to (17Z)-protosta-17(20),24-dien-3-beta-ol (protostadienol). The synthesis of protostadienol is followed by several steps of monooxygenation, dehydrogenation, and acyl transfer to yield the final helvolic acid. Following the cyclization to the tetracyclic protostadienol by helA, cytochrome P450 monooxygenases helB1-mediated and helB2-mediated oxidation at C-4 and C-16, acyltransferase helD2-dependent acetylation of 16-OH, oxidation of C-21 by cytochrome P450 monooxygenase helB4, and short chain dehydrogenase helC-dependent oxidative decarboxylation yield the fusidane skeleton. This intermediate is further modified in three additional steps mediated by the cytochrome P450 monooxygenase helB3, the acyltransferase helD1, and the 3-ketosteroid 1-dehydrogenase helE to give helvolic acid. Compared with the late stages in the biosynthesis of helvolic acid, enzymes involved in the early stage modifications act in a relatively strict order. The hydroxylation of C-16 by helB1 and subsequent acetylation by helD2 should occur before the helB3-mediated oxidation of C-21. C-4 demethylation in fusidane-type antibiotics proceeds in an unusual manner though it is also achieved by oxidative decarboxylation. The methyl group at C-4 beta position is oxidized by helB1 and subsequently removed by the short chain dehydrogenase helC. The polypeptide is Cytochrome P450 monooxygenase helB3 (Aspergillus fumigatus (strain ATCC MYA-4609 / CBS 101355 / FGSC A1100 / Af293) (Neosartorya fumigata)).